The sequence spans 862 residues: Kinesin-like protein KIN-7J (862 aa).

Positions 9–331 constitute a Kinesin motor domain; the sequence is RIVVSVRLRP…LLFANCAKDV (323 aa). 95–102 provides a ligand contact to ATP; sequence GQTSSGKT. Residues 340-415 adopt a coiled-coil conformation; it reads VMSDKALVKH…NFRKVASDGD (76 aa). Composition is skewed to basic and acidic residues over residues 475–499 and 518–531; these read EEHE…KEVQ and PEKK…KHSE. Disordered stretches follow at residues 475 to 532 and 596 to 643; these read EEHE…HSES and DDSA…STCN. Positions 598 to 610 are enriched in polar residues; that stretch reads SASTTPSSETFRY. Residues 613–629 show a composition bias toward basic and acidic residues; sequence RRPEKVRKSLSPDEIAD.

This sequence belongs to the TRAFAC class myosin-kinesin ATPase superfamily. Kinesin family. KIN-7 subfamily.

The protein is Kinesin-like protein KIN-7J of Oryza sativa subsp. japonica (Rice).